A 350-amino-acid chain; its full sequence is MFGLKRNAVIGLNLYCGGAGLGAGSGGATRPGGRLLATEKEASARREIGGGEAGAVIGGSAGASPPSTLTPDSRRVARPPPIGAEVPDVTATPARLLFFAPTRRAAPLEEMEAPAADAIMSPEEELDGYEPEPLGKRPAVLPLLELVGESGNNTSTDGSLPSTPPPAEEEEDELYRQSLEIISRYLREQATGAKDTKPMGRSGATSRKALETLRRVGDGVQRNHETAFQGMLRKLDIKNEDDVKSLSRVMIHVFSDGVTNWGRIVTLISFGAFVAKHLKTINQESCIEPLAESITDVLVRTKRDWLVKQRGWDGFVEFFHVEDLEGGIRNVLLAFAGVAGVGAGLAYLIR.

Residues K5 and K40 each participate in a glycyl lysine isopeptide (Lys-Gly) (interchain with G-Cter in ubiquitin) cross-link. The tract at residues 47–87 is disordered; that stretch reads EIGGGEAGAVIGGSAGASPPSTLTPDSRRVARPPPIGAEVP. Over residues 50–61 the composition is skewed to gly residues; sequence GGEAGAVIGGSA. A PEST-like region spans residues 104-175; it reads RAAPLEEMEA…PAEEEEDELY (72 aa). Position 121 is a phosphoserine (S121). K136 participates in a covalent cross-link: Glycyl lysine isopeptide (Lys-Gly) (interchain with G-Cter in ubiquitin). The tract at residues 148 to 171 is disordered; sequence GESGNNTSTDGSLPSTPPPAEEEE. Polar residues predominate over residues 150 to 161; it reads SGNNTSTDGSLP. S159 bears the Phosphoserine; by GSK3-alpha and GSK3-beta mark. The residue at position 162 (S162) is a Phosphoserine. T163 bears the Phosphothreonine; by MAPK mark. Glycyl lysine isopeptide (Lys-Gly) (interchain with G-Cter in ubiquitin) cross-links involve residues K194 and K197. Positions 209–223 match the BH3 motif; it reads ALETLRRVGDGVQRN. Positions 252-272 match the BH1 motif; the sequence is HVFSDGVTNWGRIVTLISFGA. The BH2 motif lies at 304-319; it reads DWLVKQRGWDGFVEFF. The helical transmembrane segment at 328–348 threads the bilayer; sequence IRNVLLAFAGVAGVGAGLAYL.

The protein belongs to the Bcl-2 family. Interacts with HIF3A (via C-terminus domain). Interacts with BAD, BOK, BIK and BMF. Interacts with PMAIP1. Interacts with BBC3. Isoform 1 interacts with BAX, BAK1 and TPT1. Heterodimer of isoform 1 and isoform 2. Homodimers of isoform 1 or isoform 2 are not detected. Isoform 2 does not interact with pro-apoptotic BCL2-related proteins. Interacts with RTL10/BOP. Interacts with BCL2L11; may sequester BCL2L11 to prevent its pro-apoptotic activity. Interacts with GIMAP5 and HSPA8/HSC70; the interaction between HSPA8 and MCL1 is impaired in the absence of GIMAP5. In terms of processing, cleaved by CASP3 during apoptosis. In intact cells cleavage occurs preferentially after Asp-127, yielding a pro-apoptotic 28 kDa C-terminal fragment. Post-translationally, rapidly degraded in the absence of phosphorylation on Thr-163 in the PEST region. Phosphorylated on Ser-159, by GSK3, in response to IL3/interleukin-3 withdrawal. Phosphorylation at Ser-159 induces ubiquitination and proteasomal degradation, abrogating the anti-apoptotic activity. Treatment with taxol or okadaic acid induces phosphorylation on additional sites. In terms of processing, ubiquitinated. Ubiquitination is induced by phosphorylation at Ser-159. Deubiquitinated by USP20; leading to increased stability.

The protein localises to the membrane. It localises to the cytoplasm. It is found in the mitochondrion. The protein resides in the nucleus. Its subcellular location is the nucleoplasm. Its function is as follows. Involved in the regulation of apoptosis versus cell survival, and in the maintenance of viability but not of proliferation. Mediates its effects by interactions with a number of other regulators of apoptosis. Isoform 1 inhibits apoptosis. Isoform 2 promotes apoptosis. The chain is Induced myeloid leukemia cell differentiation protein Mcl-1 (MCL1) from Homo sapiens (Human).